The chain runs to 124 residues: Small ribosomal subunit protein bS6 (124 aa).

A disordered region spans residues 97 to 124 (TGPSPMMKEVQREEAKKAAAAQPTEAQA). Residues 114-124 (AAAAQPTEAQA) are compositionally biased toward low complexity.

This sequence belongs to the bacterial ribosomal protein bS6 family.

In terms of biological role, binds together with bS18 to 16S ribosomal RNA. The polypeptide is Small ribosomal subunit protein bS6 (Paraburkholderia phymatum (strain DSM 17167 / CIP 108236 / LMG 21445 / STM815) (Burkholderia phymatum)).